A 600-amino-acid polypeptide reads, in one-letter code: Aspartate--tRNA(Asp/Asn) ligase (600 aa).

L-aspartate is bound at residue Glu-174. The interval 198 to 201 is aspartate; the sequence is QLFK. Arg-220 contributes to the L-aspartate binding site. ATP contacts are provided by residues 220–222 and Gln-229; that span reads RDE. L-aspartate is bound at residue His-457. Residue Glu-491 coordinates ATP. Arg-498 is a binding site for L-aspartate. An ATP-binding site is contributed by 543-546; it reads GLDR.

This sequence belongs to the class-II aminoacyl-tRNA synthetase family. Type 1 subfamily. In terms of assembly, homodimer.

The protein localises to the cytoplasm. The enzyme catalyses tRNA(Asx) + L-aspartate + ATP = L-aspartyl-tRNA(Asx) + AMP + diphosphate. Functionally, aspartyl-tRNA synthetase with relaxed tRNA specificity since it is able to aspartylate not only its cognate tRNA(Asp) but also tRNA(Asn). Reaction proceeds in two steps: L-aspartate is first activated by ATP to form Asp-AMP and then transferred to the acceptor end of tRNA(Asp/Asn). This Burkholderia orbicola (strain MC0-3) protein is Aspartate--tRNA(Asp/Asn) ligase.